The sequence spans 166 residues: Small ribosomal subunit protein uS9 (166 aa).

Residues 135–166 form a disordered region; the sequence is KKAGFLTRDPRATERKKYGLKKARKAPQYSKR. Residues 142–151 are compositionally biased toward basic and acidic residues; that stretch reads RDPRATERKK. The segment covering 152–166 has biased composition (basic residues); it reads YGLKKARKAPQYSKR.

This sequence belongs to the universal ribosomal protein uS9 family.

The chain is Small ribosomal subunit protein uS9 from Mycobacterium avium (strain 104).